A 261-amino-acid chain; its full sequence is Zinc finger protein 664 (261 aa).

9 consecutive C2H2-type zinc fingers follow at residues Tyr3 to His25, His31 to His53, Tyr59 to His81, Tyr87 to His109, Tyr115 to His137, Phe143 to His165, Tyr171 to His193, Tyr199 to His221, and Phe227 to His249. Lys257 is covalently cross-linked (Glycyl lysine isopeptide (Lys-Gly) (interchain with G-Cter in SUMO2)).

Belongs to the krueppel C2H2-type zinc-finger protein family. In terms of tissue distribution, expressed in the organ of Corti, stria vascularis, auditory nerve and retina. Lower levels in the tongue, cerebellum, small intestine and kidney.

The protein localises to the nucleus. In terms of biological role, may be involved in transcriptional regulation. This is Zinc finger protein 664 (ZNF664) from Cavia porcellus (Guinea pig).